The sequence spans 249 residues: Vacuolar iron transporter homolog 3 (249 aa).

Residues 1 to 32 (MAMQMNSVVHVSTSPSPSPATSPPPEGKQEHG) are disordered. Topologically, residues 1–74 (MAMQMNSVVH…SGRAQWLRAA (74 aa)) are cytoplasmic. The segment covering 16–26 (SPSPATSPPPE) has biased composition (pro residues). A helical transmembrane segment spans residues 75-95 (VLGANDGLVSVASLMIGVGAV). At 96–102 (SESGRAM) the chain is on the vacuolar side. Residues 103–123 (LVSGVAGLVAGACSMAIGEFV) form a helical membrane-spanning segment. Residues 124–166 (SVYAQYDIEVAAARRRRRQRRRRCDGDGEEEGSGRLPSPFKAA) lie on the Cytoplasmic side of the membrane. Residues 167 to 187 (AASALAFTVGALLPLLAGGFV) form a helical membrane-spanning segment. At 188–193 (RPWAPR) the chain is on the vacuolar side. A helical transmembrane segment spans residues 194–214 (VAAVCAATSAALAGFGALGAA). The Cytoplasmic segment spans residues 215-226 (LGGASPARSAAR). A helical transmembrane segment spans residues 227–247 (VLLGGWAAMAACYGVLRLFAN). The Vacuolar segment spans residues 248-249 (LY).

This sequence belongs to the CCC1 family.

It is found in the vacuole membrane. The catalysed reaction is Fe(2+)(in) = Fe(2+)(out). Functionally, probable vacuolar iron transporter that may be involved in the regulation of iron distribution throughout the plant. The polypeptide is Vacuolar iron transporter homolog 3 (Oryza sativa subsp. japonica (Rice)).